A 141-amino-acid chain; its full sequence is Mite group 2 allergen Lep d 2 (141 aa).

The N-terminal stretch at 1–16 (MMKFIALFALVAVASA) is a signal peptide. Cystine bridges form between cysteine 24–cysteine 133, cysteine 37–cysteine 42, and cysteine 88–cysteine 93. Tandem repeats lie at residues 64–65 (KV), 68–69 (KV), and 72–73 (KV). The tract at residues 64–73 (KVTIKVLAKV) is 3 X 2 AA repeats of K-V.

The protein belongs to the NPC2 family. Monomer.

Its subcellular location is the secreted. The chain is Mite group 2 allergen Lep d 2 from Lepidoglyphus destructor (Storage mite).